Consider the following 180-residue polypeptide: Large ribosomal subunit protein uL10 (180 aa).

The interval 161–180 (SKAEGSEETESNETTETVEE) is disordered. Residues 166–180 (SEETESNETTETVEE) are compositionally biased toward acidic residues.

This sequence belongs to the universal ribosomal protein uL10 family. Part of the ribosomal stalk of the 50S ribosomal subunit. The N-terminus interacts with L11 and the large rRNA to form the base of the stalk. The C-terminus forms an elongated spine to which L12 dimers bind in a sequential fashion forming a multimeric L10(L12)X complex.

Its function is as follows. Forms part of the ribosomal stalk, playing a central role in the interaction of the ribosome with GTP-bound translation factors. The polypeptide is Large ribosomal subunit protein uL10 (Finegoldia magna (strain ATCC 29328 / DSM 20472 / WAL 2508) (Peptostreptococcus magnus)).